We begin with the raw amino-acid sequence, 351 residues long: Fe-S cluster assembly protein DRE2 (351 aa).

Residues 1–151 are N-terminal SAM-like domain; the sequence is MATTGRVLLL…KPDIGAQQAI (151 aa). The interval 93 to 118 is disordered; sequence RNRENKPWGLSDGNGNNANSSRRYND. Residues 105 to 114 show a composition bias toward polar residues; sequence GNGNNANSSR. The linker stretch occupies residues 152-243; that stretch reads PLKLGRRRKE…EDELLDEDDM (92 aa). Residues Cys253, Cys264, Cys267, and Cys269 each coordinate [2Fe-2S] cluster. Residues 253–269 are fe-S binding site A; sequence CRPKPGKRRRACKDCSC. [4Fe-4S] cluster-binding residues include Cys314, Cys317, Cys325, and Cys328. 2 short sequence motifs (cx2C motif) span residues 314–317 and 325–328; these read CGNC and CDGC. Positions 314–328 are fe-S binding site B; sequence CGNCSLGDAFRCDGC.

The protein belongs to the anamorsin family. As to quaternary structure, monomer. Interacts with TAH18. Interacts with MIA40. The cofactor is [2Fe-2S] cluster. [4Fe-4S] cluster is required as a cofactor.

The protein resides in the cytoplasm. It is found in the mitochondrion intermembrane space. Component of the cytosolic iron-sulfur (Fe-S) protein assembly (CIA) machinery required for the maturation of extramitochondrial Fe-S proteins. Part of an electron transfer chain functioning in an early step of cytosolic Fe-S biogenesis, facilitating the de novo assembly of a [4Fe-4S] cluster on the scaffold complex CFD1-NBP35. Electrons are transferred to DRE2 from NADPH via the FAD- and FMN-containing protein TAH18. TAH18-DRE2 are also required for the assembly of the diferric tyrosyl radical cofactor of ribonucleotide reductase (RNR), probably by providing electrons for reduction during radical cofactor maturation in the catalytic small subunit RNR2. This chain is Fe-S cluster assembly protein DRE2, found in Ajellomyces capsulatus (strain H143) (Darling's disease fungus).